A 1303-amino-acid chain; its full sequence is DNA-directed RNA polymerase subunit beta' (1303 aa).

Zn(2+) is bound by residues Cys-60, Cys-62, Cys-75, and Cys-78. 3 residues coordinate Mg(2+): Asp-535, Asp-537, and Asp-539. The Zn(2+) site is built by Cys-876, Cys-953, Cys-960, and Cys-963.

The protein belongs to the RNA polymerase beta' chain family. The RNAP catalytic core consists of 2 alpha, 1 beta, 1 beta' and 1 omega subunit. When a sigma factor is associated with the core the holoenzyme is formed, which can initiate transcription. Requires Mg(2+) as cofactor. The cofactor is Zn(2+).

It carries out the reaction RNA(n) + a ribonucleoside 5'-triphosphate = RNA(n+1) + diphosphate. Functionally, DNA-dependent RNA polymerase catalyzes the transcription of DNA into RNA using the four ribonucleoside triphosphates as substrates. This is DNA-directed RNA polymerase subunit beta' from Saccharopolyspora erythraea (strain ATCC 11635 / DSM 40517 / JCM 4748 / NBRC 13426 / NCIMB 8594 / NRRL 2338).